We begin with the raw amino-acid sequence, 37 residues long: Large ribosomal subunit protein bL36 (37 aa).

This sequence belongs to the bacterial ribosomal protein bL36 family.

This chain is Large ribosomal subunit protein bL36, found in Syntrophomonas wolfei subsp. wolfei (strain DSM 2245B / Goettingen).